Consider the following 435-residue polypeptide: tRNA(Ile)-lysidine synthase (435 aa).

ATP is bound at residue 24 to 29; it reads SGGLDS.

It belongs to the tRNA(Ile)-lysidine synthase family.

It is found in the cytoplasm. The enzyme catalyses cytidine(34) in tRNA(Ile2) + L-lysine + ATP = lysidine(34) in tRNA(Ile2) + AMP + diphosphate + H(+). In terms of biological role, ligates lysine onto the cytidine present at position 34 of the AUA codon-specific tRNA(Ile) that contains the anticodon CAU, in an ATP-dependent manner. Cytidine is converted to lysidine, thus changing the amino acid specificity of the tRNA from methionine to isoleucine. The polypeptide is tRNA(Ile)-lysidine synthase (Chromobacterium violaceum (strain ATCC 12472 / DSM 30191 / JCM 1249 / CCUG 213 / NBRC 12614 / NCIMB 9131 / NCTC 9757 / MK)).